A 363-amino-acid chain; its full sequence is DNA replication and repair protein RecF (363 aa).

30–37 contributes to the ATP binding site; that stretch reads GPNGSGKT.

It belongs to the RecF family.

It localises to the cytoplasm. Functionally, the RecF protein is involved in DNA metabolism; it is required for DNA replication and normal SOS inducibility. RecF binds preferentially to single-stranded, linear DNA. It also seems to bind ATP. In Chlorobium limicola (strain DSM 245 / NBRC 103803 / 6330), this protein is DNA replication and repair protein RecF.